A 347-amino-acid chain; its full sequence is UDP-N-acetylenolpyruvoylglucosamine reductase (347 aa).

Residues 27 to 197 (LPARAQRLAR…TGIELRLNKM (171 aa)) form the FAD-binding PCMH-type domain. The active site involves Arg173. Catalysis depends on Ser247, which acts as the Proton donor. Glu342 is an active-site residue.

Belongs to the MurB family. The cofactor is FAD.

The protein resides in the cytoplasm. The enzyme catalyses UDP-N-acetyl-alpha-D-muramate + NADP(+) = UDP-N-acetyl-3-O-(1-carboxyvinyl)-alpha-D-glucosamine + NADPH + H(+). It functions in the pathway cell wall biogenesis; peptidoglycan biosynthesis. In terms of biological role, cell wall formation. The sequence is that of UDP-N-acetylenolpyruvoylglucosamine reductase from Alcanivorax borkumensis (strain ATCC 700651 / DSM 11573 / NCIMB 13689 / SK2).